Reading from the N-terminus, the 704-residue chain is Glycine--tRNA ligase beta subunit (704 aa).

This sequence belongs to the class-II aminoacyl-tRNA synthetase family. As to quaternary structure, tetramer of two alpha and two beta subunits.

It is found in the cytoplasm. The catalysed reaction is tRNA(Gly) + glycine + ATP = glycyl-tRNA(Gly) + AMP + diphosphate. The sequence is that of Glycine--tRNA ligase beta subunit from Rhizobium etli (strain ATCC 51251 / DSM 11541 / JCM 21823 / NBRC 15573 / CFN 42).